The chain runs to 431 residues: Serine--tRNA ligase (431 aa).

237 to 239 lines the L-serine pocket; sequence TAE. 268 to 270 is a binding site for ATP; the sequence is RSE. Glutamate 291 provides a ligand contact to L-serine. ATP is bound at residue 355 to 358; it reads EISS. Position 390 (serine 390) interacts with L-serine.

This sequence belongs to the class-II aminoacyl-tRNA synthetase family. Type-1 seryl-tRNA synthetase subfamily. In terms of assembly, homodimer. The tRNA molecule binds across the dimer.

The protein resides in the cytoplasm. It catalyses the reaction tRNA(Ser) + L-serine + ATP = L-seryl-tRNA(Ser) + AMP + diphosphate + H(+). The enzyme catalyses tRNA(Sec) + L-serine + ATP = L-seryl-tRNA(Sec) + AMP + diphosphate + H(+). The protein operates within aminoacyl-tRNA biosynthesis; selenocysteinyl-tRNA(Sec) biosynthesis; L-seryl-tRNA(Sec) from L-serine and tRNA(Sec): step 1/1. Catalyzes the attachment of serine to tRNA(Ser). Is also able to aminoacylate tRNA(Sec) with serine, to form the misacylated tRNA L-seryl-tRNA(Sec), which will be further converted into selenocysteinyl-tRNA(Sec). This is Serine--tRNA ligase from Neisseria gonorrhoeae (strain NCCP11945).